The primary structure comprises 473 residues: Trigger factor (473 aa).

The PPIase FKBP-type domain occupies 171-256 (GDRVTIDFVG…VTKIQAAGEA (86 aa)). The interval 439 to 473 (KEALFADEDGDDTTGGKPADKAEAKDESKTEAKAD) is disordered. The segment covering 456–473 (PADKAEAKDESKTEAKAD) has biased composition (basic and acidic residues).

This sequence belongs to the FKBP-type PPIase family. Tig subfamily.

It is found in the cytoplasm. It carries out the reaction [protein]-peptidylproline (omega=180) = [protein]-peptidylproline (omega=0). In terms of biological role, involved in protein export. Acts as a chaperone by maintaining the newly synthesized protein in an open conformation. Functions as a peptidyl-prolyl cis-trans isomerase. In Methylobacterium radiotolerans (strain ATCC 27329 / DSM 1819 / JCM 2831 / NBRC 15690 / NCIMB 10815 / 0-1), this protein is Trigger factor.